The following is a 401-amino-acid chain: MSVAFASARPRGKGEVTQQTIQKMLDENHHLIQCILDYQSKGKTAECTQYQQILHRNLVYLATIADSNQNMQSLLPAPPTQNMNLGPGALSQSGSSQGLHPQGSLSDTVSTGLPPASLMQGQIGNGPNHVSMQQTAQSTLPTTSMSMSGSGHGTGPGYSHSGPTSQSVPMQGQGAISNYVSRTNINMQSNPVSMMHQQAARPTTTQRRVEASITRARRPLHDGPGWQGGSMMGQRPMAPYRPSQQGSSQQYLGQEEYYSEQYSHSQGSAEPMSQQYYPDGHSDYAYQQSSYTEQSYDRSFEDPTQHYYEGGNSQYSQQQAGYQQGTAQQQTYSQQQYPNQQSYPGQQQGYGPAQGAPSQYSGYQQGQGQQYGSYRTSQTGPSAQQQRPYGYEQGQYGNYQQ.

Residues 1 to 148 form an N-terminal auto-inhibitory domain; necessary for interaction with SMARCA4/BRG1 region; sequence MSVAFASARP…TLPTTSMSMS (148 aa). The short motif at 50-53 is the SH2-binding element; the sequence is YQQI. 2 disordered regions span residues 72–171 and 214–401; these read QSLL…VPMQ and TRAR…NYQQ. Residues 85 to 106 show a composition bias toward low complexity; sequence LGPGALSQSGSSQGLHPQGSLS. Over residues 128-137 the composition is skewed to polar residues; the sequence is NHVSMQQTAQ. Residues 138 to 149 are compositionally biased toward low complexity; sequence STLPTTSMSMSG. Residues 149-237 are methionine-rich intra-molecular domain; that stretch reads GSGHGTGPGY…GGSMMGQRPM (89 aa). The segment at 251–322 is MFD domain; the sequence is YLGQEEYYSE…SQYSQQQAGY (72 aa). Polar residues-rich tracts occupy residues 260–276 and 285–294; these read EQYS…SQQY and AYQQSSYTEQ. Over residues 295–304 the composition is skewed to basic and acidic residues; sequence SYDRSFEDPT. Residues 310–374 are compositionally biased toward low complexity; the sequence is GGNSQYSQQQ…QGQGQQYGSY (65 aa). A necessary for nuclear localization region spans residues 339–401; it reads NQQSYPGQQQ…EQGQYGNYQQ (63 aa). The SH2-binding signature appears at 358-361; sequence SQYS. Positions 375 to 387 are enriched in polar residues; it reads RTSQTGPSAQQQR. Residues 376 to 384 carry the SH3-binding motif; it reads TSQTGPSAQ. The span at 389-401 shows a compositional bias: low complexity; the sequence is YGYEQGQYGNYQQ. Residues 392–401 form a necessary for interaction with CREBBP and for the recruitment of CREBBP to the nuclear bodies region; it reads EQGQYGNYQQ. The SH2-binding signature appears at 396–399; it reads YGNY.

The protein belongs to the SS18 family. In terms of assembly, homodimer. Dimerization may be necessary for its function in neuronal dendritic development. Interacts (via C-terminus) with CREBBP (via N-terminus), EP300 and SMARCA4/BRG1. Interacts with the nBAF complex. Association with CREBBP facilitates transcription while the association with SMARCA4/BRG1 suppresses CREST-mediated transcription in resting neurons. Brain (at protein level). Also found in the heart, liver, kidney and testis.

The protein resides in the nucleus. Its subcellular location is the chromosome. It is found in the centromere. The protein localises to the kinetochore. Transcriptional activator which is required for calcium-dependent dendritic growth and branching in cortical neurons. Recruits CREB-binding protein (CREBBP) to nuclear bodies. Component of the CREST-BRG1 complex, a multiprotein complex that regulates promoter activation by orchestrating a calcium-dependent release of a repressor complex and a recruitment of an activator complex. In resting neurons, transcription of the c-FOS promoter is inhibited by BRG1-dependent recruitment of a phospho-RB1-HDAC1 repressor complex. Upon calcium influx, RB1 is dephosphorylated by calcineurin, which leads to release of the repressor complex. At the same time, there is increased recruitment of CREBBP to the promoter by a CREST-dependent mechanism, which leads to transcriptional activation. The CREST-BRG1 complex also binds to the NR2B promoter, and activity-dependent induction of NR2B expression involves a release of HDAC1 and recruitment of CREBBP. This chain is Calcium-responsive transcription coactivator (Ss18l1), found in Rattus norvegicus (Rat).